A 650-amino-acid polypeptide reads, in one-letter code: Chaperone protein DnaK (650 aa).

At threonine 200 the chain carries Phosphothreonine; by autocatalysis. The disordered stretch occupies residues 613-634 (QAGAAGAAGAAEGAAHAGGAQQ).

This sequence belongs to the heat shock protein 70 family.

In terms of biological role, acts as a chaperone. The sequence is that of Chaperone protein DnaK from Burkholderia vietnamiensis (strain G4 / LMG 22486) (Burkholderia cepacia (strain R1808)).